The primary structure comprises 367 residues: Alanine racemase (367 aa).

The active-site Proton acceptor; specific for D-alanine is the Lys40. Residue Lys40 is modified to N6-(pyridoxal phosphate)lysine. Arg136 lines the substrate pocket. Tyr263 functions as the Proton acceptor; specific for L-alanine in the catalytic mechanism. Met310 serves as a coordination point for substrate.

This sequence belongs to the alanine racemase family. Pyridoxal 5'-phosphate serves as cofactor.

The catalysed reaction is L-alanine = D-alanine. The protein operates within amino-acid biosynthesis; D-alanine biosynthesis; D-alanine from L-alanine: step 1/1. Catalyzes the interconversion of L-alanine and D-alanine. May also act on other amino acids. The polypeptide is Alanine racemase (alr) (Lactococcus lactis subsp. cremoris (strain MG1363)).